The following is a 273-amino-acid chain: Proteasome subunit beta type-10 (273 aa).

Methionine 1 carries the post-translational modification N-acetylmethionine. A propeptide spans 1 to 39 (removed in mature form); that stretch reads MQKTVLEPQRGFSFENCERNAALQRALPGLRVPHARKTG. Threonine 40 acts as the Nucleophile in catalysis. A Phosphoserine modification is found at serine 230.

Belongs to the peptidase T1B family. The 26S proteasome consists of a 20S proteasome core and two 19S regulatory subunits. The 20S proteasome core is composed of 28 subunits that are arranged in four stacked rings, resulting in a barrel-shaped structure. The two end rings are each formed by seven alpha subunits, and the two central rings are each formed by seven beta subunits. The catalytic chamber with the active sites is on the inside of the barrel. Component of the immunoproteasome, where it displaces the equivalent housekeeping subunit PSMB7. Component of the spermatoproteasome, a form of the proteasome specifically found in testis. In terms of processing, autocleaved. The resulting N-terminal Thr residue of the mature subunit is responsible for the nucleophile proteolytic activity.

Its subcellular location is the cytoplasm. The protein resides in the nucleus. The enzyme catalyses Cleavage of peptide bonds with very broad specificity.. Its function is as follows. The proteasome is a multicatalytic proteinase complex which is characterized by its ability to cleave peptides with Arg, Phe, Tyr, Leu, and Glu adjacent to the leaving group at neutral or slightly basic pH. The proteasome has an ATP-dependent proteolytic activity. This subunit is involved in antigen processing to generate class I binding peptides. In Bos taurus (Bovine), this protein is Proteasome subunit beta type-10 (PSMB10).